Reading from the N-terminus, the 39-residue chain is Photosystem II reaction center protein J (39 aa).

Residues 7–27 form a helical membrane-spanning segment; the sequence is IPLWLVATVAGMGVITLLGIF.

The protein belongs to the PsbJ family. As to quaternary structure, PSII is composed of 1 copy each of membrane proteins PsbA, PsbB, PsbC, PsbD, PsbE, PsbF, PsbH, PsbI, PsbJ, PsbK, PsbL, PsbM, PsbT, PsbX, PsbY, PsbZ, Psb30/Ycf12, peripheral proteins PsbO, CyanoQ (PsbQ), PsbU, PsbV and a large number of cofactors. It forms dimeric complexes.

The protein resides in the cellular thylakoid membrane. Functionally, one of the components of the core complex of photosystem II (PSII). PSII is a light-driven water:plastoquinone oxidoreductase that uses light energy to abstract electrons from H(2)O, generating O(2) and a proton gradient subsequently used for ATP formation. It consists of a core antenna complex that captures photons, and an electron transfer chain that converts photonic excitation into a charge separation. In Cyanothece sp. (strain PCC 7425 / ATCC 29141), this protein is Photosystem II reaction center protein J.